The primary structure comprises 531 residues: Sop-2-related protein 3 (531 aa).

In terms of tissue distribution, expressed ubiquitously.

The protein localises to the cytoplasm. Its subcellular location is the nucleus. In terms of biological role, probably acts synergistically with sop-2 to maintain the transcriptionally repressive state of homeotic genes in order to regulate various neurogenic identities. Specification of some neuronal identities also involves expression of non-Hox genes. Specifies dopaminergic and serotonergic neuronal cell fate, and regulates neurotransmitter choice and axon pathfinding. The sequence is that of Sop-2-related protein 3 (sor-3) from Caenorhabditis elegans.